The following is a 312-amino-acid chain: Zinc-finger homeodomain protein 4 (312 aa).

A disordered region spans residues 20–74 (GGGGSHGHMIHHHDHHAANSAPPTHNNNNTTQPPPMPLHGNGHGNNYDHHHHQDP). The segment covering 37 to 50 (ANSAPPTHNNNNTT) has biased composition (low complexity). The ZF-HD dimerization-type; degenerate zinc-finger motif lies at 90–139 (YKECLKNHAAAMGGNATDGCGEFMPSGEDGSIEALTCSACNCHRNFHRKE). Positions 218–281 (KKRFRTKFTP…NNKIHFSKKN (64 aa)) form a DNA-binding region, homeobox.

As to quaternary structure, homo- and heterodimer with other ZFHD proteins. Interacts with ZHD1, ZHD2, ZHD5, ZHD7, ZHD8, ZHD10 and ZHD11. In terms of tissue distribution, mostly expressed in flowers and inflorescence.

The protein resides in the nucleus. Its function is as follows. Putative transcription factor. Probably involved in the regulation of floral induction. The protein is Zinc-finger homeodomain protein 4 (ZHD4) of Arabidopsis thaliana (Mouse-ear cress).